Reading from the N-terminus, the 155-residue chain is RNA pyrophosphohydrolase (155 aa).

In terms of domain architecture, Nudix hydrolase spans 6-148; it reads GYRANVAIVL…KQEVYRKALT (143 aa). The Nudix box motif lies at 38 to 59; sequence GGVATGETPLQAMYRELHEEIG.

This sequence belongs to the Nudix hydrolase family. RppH subfamily. It depends on a divalent metal cation as a cofactor.

Accelerates the degradation of transcripts by removing pyrophosphate from the 5'-end of triphosphorylated RNA, leading to a more labile monophosphorylated state that can stimulate subsequent ribonuclease cleavage. This Francisella tularensis subsp. tularensis (strain FSC 198) protein is RNA pyrophosphohydrolase.